A 399-amino-acid polypeptide reads, in one-letter code: Phosphoglycerate kinase (399 aa).

Substrate-binding positions include 21 to 23, R36, 59 to 62, R120, and R158; these read DFN and HLGR. ATP-binding positions include K209, G297, E328, and 355–358; that span reads GGDS.

It belongs to the phosphoglycerate kinase family. In terms of assembly, monomer.

The protein localises to the cytoplasm. It catalyses the reaction (2R)-3-phosphoglycerate + ATP = (2R)-3-phospho-glyceroyl phosphate + ADP. Its pathway is carbohydrate degradation; glycolysis; pyruvate from D-glyceraldehyde 3-phosphate: step 2/5. This is Phosphoglycerate kinase from Streptococcus suis (strain 05ZYH33).